A 51-amino-acid polypeptide reads, in one-letter code: uncharacterized protein (51 aa).

The tract at residues 1–28 (MQQPQNITTSSISNNNNNNTSLTLQQQQ) is disordered. Positions 13–47 (SNNNNNNTSLTLQQQQEQLQQLQIKRKRNLMKQLQ) form a coiled coil.

This is an uncharacterized protein from Dictyostelium discoideum (Social amoeba).